The sequence spans 159 residues: Ribosomal RNA large subunit methyltransferase H (159 aa).

S-adenosyl-L-methionine-binding positions include L76, G108, and 127-132 (FGLLTL).

It belongs to the RNA methyltransferase RlmH family. As to quaternary structure, homodimer.

The protein resides in the cytoplasm. It carries out the reaction pseudouridine(1915) in 23S rRNA + S-adenosyl-L-methionine = N(3)-methylpseudouridine(1915) in 23S rRNA + S-adenosyl-L-homocysteine + H(+). In terms of biological role, specifically methylates the pseudouridine at position 1915 (m3Psi1915) in 23S rRNA. This is Ribosomal RNA large subunit methyltransferase H from Streptococcus agalactiae serotype Ia (strain ATCC 27591 / A909 / CDC SS700).